A 461-amino-acid chain; its full sequence is Elongation factor 1-alpha (461 aa).

The region spanning 5-242 (KIHINIVVIG…DAILPPSRPT (238 aa)) is the tr-type G domain. The G1 stretch occupies residues 14 to 21 (GHVDSGKS). 14–21 (GHVDSGKS) lines the GTP pocket. The tract at residues 70–74 (GITID) is G2. The interval 91–94 (DAPG) is G3. Residues 91–95 (DAPGH) and 153–156 (NKMD) contribute to the GTP site. The segment at 153-156 (NKMD) is G4. A G5 region spans residues 194–196 (SGW). 2 positions are modified to 5-glutamyl glycerylphosphorylethanolamine: Glu-301 and Glu-374.

Belongs to the TRAFAC class translation factor GTPase superfamily. Classic translation factor GTPase family. EF-Tu/EF-1A subfamily.

The protein localises to the cytoplasm. This protein promotes the GTP-dependent binding of aminoacyl-tRNA to the A-site of ribosomes during protein biosynthesis. The protein is Elongation factor 1-alpha of Apis mellifera (Honeybee).